Here is a 295-residue protein sequence, read N- to C-terminus: Indole-3-glycerol phosphate synthase (295 aa).

It belongs to the TrpC family.

It catalyses the reaction 1-(2-carboxyphenylamino)-1-deoxy-D-ribulose 5-phosphate + H(+) = (1S,2R)-1-C-(indol-3-yl)glycerol 3-phosphate + CO2 + H2O. The protein operates within amino-acid biosynthesis; L-tryptophan biosynthesis; L-tryptophan from chorismate: step 4/5. The polypeptide is Indole-3-glycerol phosphate synthase (Prochlorococcus marinus (strain NATL1A)).